The primary structure comprises 221 residues: MDVTGDTVPPANLRNEYAADLGLTESNLAGDWYTQFDRWFTEVVAAGLPEPNAMVLGTADRAGRPSARTVLLKGYDPDGFVLFTNYGSHKGTELAANPYASLVFPWFMLQRQVVVTGRVDRLDRAETEAYFASRPRGSQLGAWASEQSRVLPNRSALDDAYRAMAERYADGVPIPAPPNWGGFRLRPDGVEFWQGQASRLHDRLRFRSTDGGDWVVERLAP.

Substrate-binding positions include 14–17 (RNEY) and Lys73. Residues 68–73 (RTVLLK), 83–84 (FT), Lys90, and Gln112 contribute to the FMN site. Residues Tyr130, Arg134, and Ser138 each coordinate substrate. FMN contacts are provided by residues 147-148 (QS) and Trp193. 199-201 (RLH) contributes to the substrate binding site. Arg203 is a binding site for FMN.

This sequence belongs to the pyridoxamine 5'-phosphate oxidase family. As to quaternary structure, homodimer. Requires FMN as cofactor.

The catalysed reaction is pyridoxamine 5'-phosphate + O2 + H2O = pyridoxal 5'-phosphate + H2O2 + NH4(+). The enzyme catalyses pyridoxine 5'-phosphate + O2 = pyridoxal 5'-phosphate + H2O2. It participates in cofactor metabolism; pyridoxal 5'-phosphate salvage; pyridoxal 5'-phosphate from pyridoxamine 5'-phosphate: step 1/1. It functions in the pathway cofactor metabolism; pyridoxal 5'-phosphate salvage; pyridoxal 5'-phosphate from pyridoxine 5'-phosphate: step 1/1. Catalyzes the oxidation of either pyridoxine 5'-phosphate (PNP) or pyridoxamine 5'-phosphate (PMP) into pyridoxal 5'-phosphate (PLP). The sequence is that of Pyridoxine/pyridoxamine 5'-phosphate oxidase from Salinispora arenicola (strain CNS-205).